Consider the following 582-residue polypeptide: 5-aminolevulinate synthase, erythroid-specific, mitochondrial (582 aa).

A mitochondrion-targeting transit peptide spans 1-44 (MLLQRCPVLIRSPTAILGKMIKTHQFLIGIGRCPILATQGTTCS). Residue R158 coordinates succinyl-CoA. Pyridoxal 5'-phosphate contacts are provided by C253 and F254. Succinyl-CoA contacts are provided by S275 and K294. Pyridoxal 5'-phosphate-binding residues include S327, H355, and T383. Residue K386 is part of the active site. K386 is subject to N6-(pyridoxal phosphate)lysine. Positions 415 and 416 each coordinate pyridoxal 5'-phosphate. Position 503 (T503) interacts with succinyl-CoA.

The protein belongs to the class-II pyridoxal-phosphate-dependent aminotransferase family. In terms of assembly, homodimer. Requires pyridoxal 5'-phosphate as cofactor.

It localises to the mitochondrion inner membrane. It carries out the reaction succinyl-CoA + glycine + H(+) = 5-aminolevulinate + CO2 + CoA. Its pathway is porphyrin-containing compound metabolism; protoporphyrin-IX biosynthesis; 5-aminolevulinate from glycine: step 1/1. Catalyzes the pyridoxal 5'-phosphate (PLP)-dependent condensation of succinyl-CoA and glycine to form aminolevulinic acid (ALA), with CoA and CO2 as by-products. Contributes significantly to heme formation during erythropoiesis. The protein is 5-aminolevulinate synthase, erythroid-specific, mitochondrial (ALAS2) of Delphinapterus leucas (Beluga whale).